The chain runs to 610 residues: MGLKAAQKTLFPLRSIDDVVRLFAAELGREEPDLVLLSLVLGFVEHFLAVNRVIPTNVPELTFQPSPAPDPPGGLTYFPVADLSIIAALYARFTAQIRGAVDLSLYPREGGVSSRELVKKVSDVIWNSLSRSYFKDRAHIQSLFSFITGTKLDSSGVAFAVVGACQALGLRDVHLALSEDHAWVVFGPNGEQTAEVTWHGKGNEDRRGQTVNAGVAERSWLYLKGSYMRCDRKMEVAFMVCAINPSIDLHTDSLELLQLQQKLLWLLYDLGHLERYPMALGNLADLEELEPTPGRPDPLTLYHKGIASAKTYYRDEHIYPYMYLAGYHCRNRNVREALQAWADTATVIQDYNYCREDEEIYKEFFEVANDVIPNLLKEAASLLEAGEERPGEQTQGVQSQGSALQDPECFAHLLRFYDGICKWEEGSPTPVLHVGWATFLVQSLGRFEGQVRQKVRIVSREAEAAEAEELWGEEAREGRRRGPRRESKPEEPPPPKKPALDKGPGGGQGAMSGPPRKPPGTVPGTARGPEGGSTAPAPAPAASPPPEGPVLTFQSEKMKGMKELLVATKINSSAIKLQLTAQSQVQMKKQKVSTPSDYTLSFLKRQRKGL.

Positions 214 to 390 are interaction with FANCD2; sequence GVAERSWLYL…SLLEAGEERP (177 aa). Positions 462 to 552 are disordered; that stretch reads AEAAEAEELW…SPPPEGPVLT (91 aa). Residues 484–500 show a composition bias toward basic and acidic residues; the sequence is RRESKPEEPPPPKKPAL. Residues S487 and S543 each carry the phosphoserine modification. Pro residues predominate over residues 537 to 548; that stretch reads APAPAASPPPEG. T594 is subject to Phosphothreonine.

As to quaternary structure, component of the MLL-HCF complex, at least composed of KMT2A/MLL1, MEN1, ASH2L, RBBP5, DPY30, WDR5, HCFC1 and HCFC2. Component of the menin-associated histone methyltransferase complex, at least composed of KMT2B/MLL4, MEN1, ASH2L, RBBP5, DPY30 and WDR5. Interacts with POLR2B. Interacts with POLR2A phosphorylated at 'Ser-5', but not with the unphosphorylated, nor 'Ser-2' phosphorylated POLR2A forms. Interacts with FANCD2 and DBF4. Interacts with SMAD3, but not with SMAD2, nor SMAD4. Directly interacts with NFKB1, NFKB2 and RELA. Interacts with JUND (via MBM motif); inhibits the interaction of JUND with MAPK10 and the phosphorylation of JUND by MAP kinases MAPK8 and MAPK10. Interacts with KMT2A (via MBM motif). The KMT2A-MEN1 complex interacts with PSIP1 with a greater affinity as MEN1 enhances interaction of KMT2A with PSIP1.

It localises to the nucleus. In terms of biological role, essential component of a MLL/SET1 histone methyltransferase (HMT) complex, a complex that specifically methylates 'Lys-4' of histone H3 (H3K4). Functions as a transcriptional regulator. Binds to the TERT promoter and represses telomerase expression. Plays a role in TGFB1-mediated inhibition of cell-proliferation, possibly regulating SMAD3 transcriptional activity. Represses JUND-mediated transcriptional activation on AP1 sites, as well as that mediated by NFKB subunit RELA. Positively regulates HOXC8 and HOXC6 gene expression. May be involved in normal hematopoiesis through the activation of HOXA9 expression. May be involved in DNA repair. This Canis lupus familiaris (Dog) protein is Menin (MEN1).